Consider the following 457-residue polypeptide: Protein PIN-LIKES 2 (457 aa).

Over 1–15 (MSGFSSGNVNSRVVD) the chain is Lumenal. The chain crosses the membrane as a helical span at residues 16-36 (ILSGVVPLLKLICLTVIGLLL). Residues 37 to 54 (AHPKTQLVPRATFRLLSK) are Cytoplasmic-facing. Residues 55-75 (LVFALFLPCLIFTELGESITL) form a helical membrane-spanning segment. The Lumenal portion of the chain corresponds to 76-85 (DNIVQWWFIP). A helical membrane pass occupies residues 86–106 (VNVLLSAVVGSLIGYLVVLIC). The Cytoplasmic portion of the chain corresponds to 107-116 (RPPPEFNRFT). The chain crosses the membrane as a helical span at residues 117–137 (IVMTAFGNTGNLLLAIVSSVC). The Lumenal portion of the chain corresponds to 138-151 (HTKTNPFGPNCNSR). Residues 152–172 (GVSYVSFAQWVAVILVYTVVY) form a helical membrane-spanning segment. The Cytoplasmic segment spans residues 173–291 (HMMEPPLEYY…PVKHILQPPT (119 aa)). A helical transmembrane segment spans residues 292–312 (IASLLAIIIGSVPQLKSVVFG). At 313-322 (YDAPLSFITD) the chain is on the lumenal side. A helical transmembrane segment spans residues 323–343 (SLNIMGSAMVPSVMLVLGGML). The Cytoplasmic portion of the chain corresponds to 344–356 (SEGPNESTLGLRT). A helical membrane pass occupies residues 357 to 377 (TIGISVARLLVLPLVGIGIVM). The Lumenal portion of the chain corresponds to 378–393 (SADKLGLISSADPMFK). A helical transmembrane segment spans residues 394–414 (FVLLLQYSTPSAILLGAIASL). Topologically, residues 415 to 424 (RGYAVREASA) are cytoplasmic. The helical transmembrane segment at 425-445 (LLFWQHIFALLSLTFYIVIFF) threads the bilayer. Over 446 to 457 (KLTVETTVQGMQ) the chain is Lumenal.

Belongs to the auxin efflux carrier (TC 2.A.69.2) family. In terms of tissue distribution, expressed in seedlings, rosette and cauline leaves, flowers and siliques.

It localises to the endoplasmic reticulum membrane. Its function is as follows. Involved in cellular auxin homeostasis by regulating auxin metabolism. Regulates intracellular auxin accumulation at the endoplasmic reticulum and thus auxin availability for nuclear auxin signaling. This chain is Protein PIN-LIKES 2, found in Arabidopsis thaliana (Mouse-ear cress).